A 299-amino-acid chain; its full sequence is MMRHLISIGDLDREDINYILKKAEEFEDVARGEKKLRILEGKILGNLFFEPSTRTRMSFETAMKRLGGDVINMTAQEASSIAKGETLADTIRVVSGYCDAIVIRHPLEGAARFAAENSSVPVINAGDGAGQHPTQTLLDLYTIKKECGRLDGITIALMGDLKYSRTIHSLIKALALFDMRIYLISPEALALPEDIIEDVSAEIRRARLEEVISEIDVLYVTRIQKERFPDEEEYRKVSGSYRITAETLKSAKDSMIVMHPLPRVDEIHPSVDSTKHARYFQQSFYGVPVRMAILSEVML.

Residues R54 and T55 each coordinate carbamoyl phosphate. K83 is a binding site for L-aspartate. 3 residues coordinate carbamoyl phosphate: R104, H132, and Q135. R165 and R222 together coordinate L-aspartate. The carbamoyl phosphate site is built by L261 and P262.

Belongs to the aspartate/ornithine carbamoyltransferase superfamily. ATCase family. In terms of assembly, heterooligomer of catalytic and regulatory chains.

The enzyme catalyses carbamoyl phosphate + L-aspartate = N-carbamoyl-L-aspartate + phosphate + H(+). It participates in pyrimidine metabolism; UMP biosynthesis via de novo pathway; (S)-dihydroorotate from bicarbonate: step 2/3. Its function is as follows. Catalyzes the condensation of carbamoyl phosphate and aspartate to form carbamoyl aspartate and inorganic phosphate, the committed step in the de novo pyrimidine nucleotide biosynthesis pathway. The protein is Aspartate carbamoyltransferase catalytic subunit of Archaeoglobus fulgidus (strain ATCC 49558 / DSM 4304 / JCM 9628 / NBRC 100126 / VC-16).